We begin with the raw amino-acid sequence, 219 residues long: Ribose-5-phosphate isomerase A (219 aa).

Substrate contacts are provided by residues 28–31 (TGST), 81–84 (DGAD), and 94–97 (KGGG). Glu103 functions as the Proton acceptor in the catalytic mechanism. A substrate-binding site is contributed by Lys121.

This sequence belongs to the ribose 5-phosphate isomerase family. Homodimer.

It catalyses the reaction aldehydo-D-ribose 5-phosphate = D-ribulose 5-phosphate. The protein operates within carbohydrate degradation; pentose phosphate pathway; D-ribose 5-phosphate from D-ribulose 5-phosphate (non-oxidative stage): step 1/1. Functionally, catalyzes the reversible conversion of ribose-5-phosphate to ribulose 5-phosphate. The sequence is that of Ribose-5-phosphate isomerase A from Pectobacterium atrosepticum (strain SCRI 1043 / ATCC BAA-672) (Erwinia carotovora subsp. atroseptica).